Here is a 204-residue protein sequence, read N- to C-terminus: Transcription factor bHLH120 (204 aa).

Disordered stretches follow at residues 1–27 (MNPS…KKEK) and 93–116 (KREI…RSEP). In terms of domain architecture, bHLH spans 26 to 78 (EKKLLHRNIERQRRQEMAILFASLRSQLPLKYIKGKRAMSDHVNGAVSFIKDT).

As to quaternary structure, homodimer.

The protein localises to the nucleus. This is Transcription factor bHLH120 (BHLH120) from Arabidopsis thaliana (Mouse-ear cress).